The following is a 680-amino-acid chain: Probable Xaa-Pro aminopeptidase P (680 aa).

4 residues coordinate Mn(2+): aspartate 477, aspartate 488, glutamate 586, and glutamate 600.

This sequence belongs to the peptidase M24B family. Mn(2+) is required as a cofactor.

The enzyme catalyses Release of any N-terminal amino acid, including proline, that is linked to proline, even from a dipeptide or tripeptide.. Functionally, catalyzes the removal of a penultimate prolyl residue from the N-termini of peptides. This is Probable Xaa-Pro aminopeptidase P (AMPP) from Podospora anserina (strain S / ATCC MYA-4624 / DSM 980 / FGSC 10383) (Pleurage anserina).